The sequence spans 193 residues: Superoxide dismutase [Fe] (193 aa).

Positions 27, 75, 159, and 163 each coordinate Fe cation.

It belongs to the iron/manganese superoxide dismutase family. In terms of assembly, homodimer. Fe cation is required as a cofactor.

It carries out the reaction 2 superoxide + 2 H(+) = H2O2 + O2. In terms of biological role, destroys superoxide anion radicals which are normally produced within the cells and which are toxic to biological systems. This Bacteroides fragilis (strain YCH46) protein is Superoxide dismutase [Fe] (sodB).